The following is a 208-amino-acid chain: Photosystem I reaction center subunit II-1, chloroplastic (208 aa).

A chloroplast-targeting transit peptide spans 1-45 (MATQAAGIFNSAITTAATSGVKKLHFFSTTHRPKSLSFTKTAIRA). Thr-48 is modified (phosphothreonine). The interval 49-72 (DSSAAAAAAPATKEAPVGFTPPQL) is disordered. Low complexity predominate over residues 50-64 (SSAAAAAAPATKEAP). The tract at residues 141 to 149 (RLRSKYKIT) is ferredoxin and ferredoxin-oxidoreductase binding.

This sequence belongs to the PsaD family. In terms of assembly, interacts with PGRL1A and PGRL1B. In terms of processing, phosphorylated by a threonine specific thylakoid kinase in a light activated and redox-dependent manner.

The protein localises to the plastid. Its subcellular location is the chloroplast thylakoid membrane. Its function is as follows. PsaD can form complexes with ferredoxin and ferredoxin-oxidoreductase in photosystem I (PS I) reaction center. PSAD may encode the ferredoxin-docking protein. This Arabidopsis thaliana (Mouse-ear cress) protein is Photosystem I reaction center subunit II-1, chloroplastic (psaD1).